The primary structure comprises 1071 residues: ATP-dependent helicase/deoxyribonuclease subunit B (1071 aa).

It belongs to the helicase family. AddB/RexB type 2 subfamily. As to quaternary structure, heterodimer of AddA and RexB. Mg(2+) is required as a cofactor.

In terms of biological role, the heterodimer acts as both an ATP-dependent DNA helicase and an ATP-dependent, dual-direction single-stranded exonuclease. Recognizes the chi site generating a DNA molecule suitable for the initiation of homologous recombination. This subunit has 5' -&gt; 3' nuclease activity but not helicase activity. In Streptococcus pyogenes serotype M12 (strain MGAS9429), this protein is ATP-dependent helicase/deoxyribonuclease subunit B.